A 96-amino-acid polypeptide reads, in one-letter code: Putative pterin-4-alpha-carbinolamine dehydratase (96 aa).

This sequence belongs to the pterin-4-alpha-carbinolamine dehydratase family.

It carries out the reaction (4aS,6R)-4a-hydroxy-L-erythro-5,6,7,8-tetrahydrobiopterin = (6R)-L-erythro-6,7-dihydrobiopterin + H2O. This Rhodospirillum rubrum (strain ATCC 11170 / ATH 1.1.1 / DSM 467 / LMG 4362 / NCIMB 8255 / S1) protein is Putative pterin-4-alpha-carbinolamine dehydratase.